The following is a 254-amino-acid chain: MASAVVRVAGRRLSQQSASGAPVLLRQMFEPKSCTYTYLLGDRESREAVLIDPVLETAHRDAQLIKELGLKLLYAVNTHCHADHITGTGVLRSLLPGCQSVISRLSGAQADLHIGEGDSIRFGRFALETRASPGHTPGCVTFVLNDQSMAFTGDALLIRGCGRTDFQQGCAKTLYHSVHEKIFTLPGNCLIYPAHDYHGLTVSTVEEERTLNPRLTLSCEEFIKVMDNLNLPKPQQIDIAVPANMRCGVQTPPS.

The transit peptide at 1 to 7 directs the protein to the mitochondrion; that stretch reads MASAVVR. Phosphoserine is present on residues S14, S17, and S19. K32 carries the N6-acetyllysine; alternate modification. Position 32 is an N6-succinyllysine; alternate (K32). K66 bears the N6-acetyllysine mark. Fe cation contacts are provided by H79, H135, and D154. N6-acetyllysine; alternate is present on K172. K172 is subject to N6-succinyllysine; alternate.

This sequence belongs to the metallo-beta-lactamase superfamily. Glyoxalase II family. As to quaternary structure, homodimer. Monomer. Interacts with TST. May interact with RELA. Fe(2+) is required as a cofactor.

Its subcellular location is the cytoplasm. It is found in the nucleus. It localises to the mitochondrion matrix. The enzyme catalyses S-sulfanylglutathione + O2 + H2O = sulfite + glutathione + 2 H(+). In terms of biological role, first described as a protein that can shuttle between the nucleus and the cytoplasm and suppress p53-induced apoptosis by sequestering the transcription factor RELA/NFKB3 in the cytoplasm and preventing its accumulation in the nucleus. Sulfur dioxygenase that plays an essential role in hydrogen sulfide catabolism in the mitochondrial matrix. Hydrogen sulfide (H(2)S) is first oxidized by SQRDL, giving rise to cysteine persulfide residues. ETHE1 consumes molecular oxygen to catalyze the oxidation of the persulfide, once it has been transferred to a thiophilic acceptor, such as glutathione (R-SSH). Plays an important role in metabolic homeostasis in mitochondria by metabolizing hydrogen sulfide and preventing the accumulation of supraphysiological H(2)S levels that have toxic effects, due to the inhibition of cytochrome c oxidase. The chain is Persulfide dioxygenase ETHE1, mitochondrial (Ethe1) from Mus musculus (Mouse).